The chain runs to 853 residues: Bromodomain-containing protein bet-1 (853 aa).

Residues 1-19 are compositionally biased toward polar residues; it reads MSEGSGDQSQQRPWASPRQ. Disordered stretches follow at residues 1–22 and 141–245; these read MSEG…QQPI and SLEQ…LRAK. The region spanning 39–145 is the Bromo 1 domain; that stretch reads RHTNKLDYIM…EVIKKSLEQA (107 aa). Positions 141–153 are enriched in basic and acidic residues; that stretch reads SLEQAPREEHDMD. 2 stretches are compositionally biased toward low complexity: residues 166–175 and 192–215; these read SDGGSKSSSS and SEVS…SVAA. A Glycyl lysine isopeptide (Lys-Gly) (interchain with G-Cter in SUMO) cross-link involves residue K252. Positions 257–366 constitute a Bromo 2 domain; it reads QPLLPSMKPC…EVFDRRWAEL (110 aa). Over residues 369–381 the composition is skewed to low complexity; sequence SSSRASSVAPQSA. A disordered region spans residues 369–418; it reads SSSRASSVAPQSAPIAPTPKVAKSSAPKEPKESRKEHKKETTFEASGAKS. A compositionally biased stretch (basic and acidic residues) spans 394–410; the sequence is APKEPKESRKEHKKETT. Residues 419–458 are a coiled coil; the sequence is EDLMQINNALSMIREREEKLKAELAAAQAIKDKLTSVKNR. Residues 516–601 enclose the NET domain; the sequence is DSDDEDNKMA…TIPTLNGNGD (86 aa). 2 disordered regions span residues 594 to 814 and 819 to 838; these read PTLN…DEQT and MRME…VSLS. Residues 612–624 show a composition bias toward low complexity; sequence TSSGATGSKGSSS. The segment covering 684–696 has biased composition (polar residues); it reads QPPSTSREWNQSS. Positions 708–736 are enriched in low complexity; the sequence is QPPMSRVPASSSTSVSAIGKNNAAASSNS. Residues 786-807 are compositionally biased toward polar residues; sequence QFFQSQPTTSATIRSPTESQPG. Positions 819-832 are enriched in basic and acidic residues; it reads MRMEAKRARQKEDE.

The protein belongs to the BET family. In terms of assembly, interacts with acetylated histone H4. Interacts (via BROMO domain 2) with smo-1 and ubc-9. Expressed in T-cells, Q-cells, V5-cells and their descendants such as somatic gonad and syncytium.

It is found in the nucleus. Its subcellular location is the chromosome. Required for the establishment and maintenance of stable cell fate in several lineages including V5.pa, T, Z1/Z4 and QR lineages probably by repressing the expression of cell fate determinants. Required to maintain non-distal tip cell (DTC) fate of somatic gonadal cells through the htz-1-mediated repression of transcription factor ceh-22. Regulates the subnuclear localization of histone variant htz-1 in somatic gonadal cells. Plays a role in the attenuation of the let-60/ras pathway, probably by preventing expression of activators of the pathway. Involved in adult locomotion. Acts together with the sumoylation pathway to prevent muscle myosin depletion in aging adults probably by preventing myoblast growth factor receptor egl-15 overexpression. May play a role in vulva development. In Caenorhabditis elegans, this protein is Bromodomain-containing protein bet-1.